We begin with the raw amino-acid sequence, 153 residues long: Ribonuclease H (153 aa).

Residues 1-141 (MKKIQLFTDG…CDDLARRAAE (141 aa)) form the RNase H type-1 domain. Mg(2+)-binding residues include D9, E47, D69, and D133.

It belongs to the RNase H family. Monomer. Mg(2+) serves as cofactor.

The protein localises to the cytoplasm. The enzyme catalyses Endonucleolytic cleavage to 5'-phosphomonoester.. Functionally, endonuclease that specifically degrades the RNA of RNA-DNA hybrids. In Psychromonas ingrahamii (strain DSM 17664 / CCUG 51855 / 37), this protein is Ribonuclease H.